The sequence spans 243 residues: Putative C-type lectin protein A7 (243 aa).

The helical transmembrane segment at Ile-23–Ala-43 threads the bilayer. Positions Gly-116–Gly-223 constitute a C-type lectin domain. 2 disulfide bridges follow: Cys-137/Cys-222 and Cys-198/Cys-214.

Its subcellular location is the host membrane. The polypeptide is Putative C-type lectin protein A7 (A7) (Alcelaphine herpesvirus 1 (strain C500) (AlHV-1)).